The primary structure comprises 413 residues: Sporulation-specific protein 74 (413 aa).

Residues methionine 1–glycine 87 are disordered. Residues histidine 69 to aspartate 83 are compositionally biased toward basic and acidic residues.

As to quaternary structure, interacts with itself. Interacts with MPC54, NUD1 and SPO21/MPC70.

Its subcellular location is the cytoplasm. The protein localises to the cytoskeleton. It is found in the microtubule organizing center. It localises to the spindle pole body. Involved in the pathway that organizes the shaping and sizing of the prospore membrane (PSM) during sporulation. Probable component of a core structural unit of the scaffold that initiates synthesis of the prospore membrane. The sequence is that of Sporulation-specific protein 74 (SPO74) from Saccharomyces cerevisiae (strain ATCC 204508 / S288c) (Baker's yeast).